A 115-amino-acid polypeptide reads, in one-letter code: MNWQDPLVKKFLYLIVAMVILCPLGILLVWNYGDAWGEWGPEDVAEKVGEDKVSGLLHLADIWSYAPLPDYDIPGWDDPFHASIGYIISAIVGVILCVGAYYALIKIVNPKAAAG.

2 helical membrane-spanning segments follow: residues 11 to 31 (FLYLIVAMVILCPLGILLVWN) and 85 to 105 (GYIISAIVGVILCVGAYYALI).

The protein to M.thermoautotrophicum MTH1706.

It is found in the cell membrane. This is an uncharacterized protein from Methanocaldococcus jannaschii (strain ATCC 43067 / DSM 2661 / JAL-1 / JCM 10045 / NBRC 100440) (Methanococcus jannaschii).